A 352-amino-acid chain; its full sequence is 7,8-didemethyl-8-hydroxy-5-deazariboflavin synthase (352 aa).

Residues 35–275 (ITFSKNAFIP…EDISIQVPPN (241 aa)) form the Radical SAM core domain. 3 residues coordinate [4Fe-4S] cluster: Cys-49, Cys-53, and Cys-56.

Belongs to the radical SAM superfamily. CofG family. Consists of two subunits, CofG and CofH. [4Fe-4S] cluster serves as cofactor.

The enzyme catalyses 5-amino-5-(4-hydroxybenzyl)-6-(D-ribitylimino)-5,6-dihydrouracil + S-adenosyl-L-methionine = 7,8-didemethyl-8-hydroxy-5-deazariboflavin + 5'-deoxyadenosine + L-methionine + NH4(+) + H(+). It functions in the pathway cofactor biosynthesis; coenzyme F0 biosynthesis. Functionally, catalyzes the radical-mediated synthesis of 7,8-didemethyl-8-hydroxy-5-deazariboflavin from 5-amino-5-(4-hydroxybenzyl)-6-(D-ribitylimino)-5,6-dihydrouracil. This Methanococcus maripaludis (strain C6 / ATCC BAA-1332) protein is 7,8-didemethyl-8-hydroxy-5-deazariboflavin synthase.